The primary structure comprises 23 residues: Phallacidin proprotein (23 aa).

Residue Pro-1 is a propeptide. The segment at residues 2 to 8 is a cross-link (cyclopeptide (Ala-Pro)); the sequence is AWLVDCP. Residues 3–7 constitute a cross-link (2'-cysteinyl-6'-hydroxytryptophan sulfoxide (Trp-Cys)); the sequence is WLVDC. A propeptide spanning residues 9-23 is cleaved from the precursor; the sequence is CVGDDVNFILTRGQK.

It belongs to the MSDIN fungal toxin family. Post-translationally, processed by the macrocyclase-peptidase enzyme POPB to yield a toxic cyclic heptapeptide. POPB first removes 10 residues from the N-terminus. Conformational trapping of the remaining peptide forces the enzyme to release this intermediate rather than proceed to macrocyclization. The enzyme rebinds the remaining peptide in a different conformation and catalyzes macrocyclization of the N-terminal 7 residues.

Its function is as follows. Major toxin that belongs to the bicyclic heptapeptides called phallotoxins. Although structurally related to amatoxins, phallotoxins have a different mode of action, which is the stabilization of F-actin. Phallotoxins are poisonous when administered parenterally, but not orally because of poor absorption. The sequence is that of Phallacidin proprotein from Amanita fuligineoides.